Consider the following 73-residue polypeptide: Translation initiation factor IF-1 (73 aa).

In terms of domain architecture, S1-like spans 1 to 73; it reads MANKEELIEF…TKGRITYRAR (73 aa).

The protein belongs to the IF-1 family. As to quaternary structure, component of the 30S ribosomal translation pre-initiation complex which assembles on the 30S ribosome in the order IF-2 and IF-3, IF-1 and N-formylmethionyl-tRNA(fMet); mRNA recruitment can occur at any time during PIC assembly.

The protein localises to the cytoplasm. Functionally, one of the essential components for the initiation of protein synthesis. Stabilizes the binding of IF-2 and IF-3 on the 30S subunit to which N-formylmethionyl-tRNA(fMet) subsequently binds. Helps modulate mRNA selection, yielding the 30S pre-initiation complex (PIC). Upon addition of the 50S ribosomal subunit IF-1, IF-2 and IF-3 are released leaving the mature 70S translation initiation complex. The protein is Translation initiation factor IF-1 of Acinetobacter baumannii (strain ATCC 17978 / DSM 105126 / CIP 53.77 / LMG 1025 / NCDC KC755 / 5377).